Here is a 457-residue protein sequence, read N- to C-terminus: tRNA modification GTPase MnmE (457 aa).

(6S)-5-formyl-5,6,7,8-tetrahydrofolate is bound by residues R23, E85, and R124. The TrmE-type G domain occupies 220 to 376 (GALVVLAGQV…LVTAIRAAVL (157 aa)). N230 contacts K(+). Residues 230 to 235 (NAGKSS), 249 to 255 (TDLPGTT), and 274 to 277 (DTAG) contribute to the GTP site. S234 provides a ligand contact to Mg(2+). Residues T249, L251, and T254 each contribute to the K(+) site. T255 contacts Mg(2+). K457 contacts (6S)-5-formyl-5,6,7,8-tetrahydrofolate.

It belongs to the TRAFAC class TrmE-Era-EngA-EngB-Septin-like GTPase superfamily. TrmE GTPase family. In terms of assembly, homodimer. Heterotetramer of two MnmE and two MnmG subunits. K(+) serves as cofactor.

The protein resides in the cytoplasm. Its function is as follows. Exhibits a very high intrinsic GTPase hydrolysis rate. Involved in the addition of a carboxymethylaminomethyl (cmnm) group at the wobble position (U34) of certain tRNAs, forming tRNA-cmnm(5)s(2)U34. The polypeptide is tRNA modification GTPase MnmE (Nitratidesulfovibrio vulgaris (strain DP4) (Desulfovibrio vulgaris)).